A 532-amino-acid polypeptide reads, in one-letter code: BEL1-like homeodomain protein 6 (532 aa).

Positions 144–160 (SKYLKAAQQLLDEAVNV) are SR/KY domain. A disordered region spans residues 170 to 203 (EGDKNNENPQEPNQSTQDSSTNPPADISQSERQE). The segment covering 176–197 (ENPQEPNQSTQDSSTNPPADIS) has biased composition (polar residues). The segment at 200 to 271 (ERQEMQSKLT…SLRDAISGQI (72 aa)) is BELL domain. Positions 314 to 376 (AWRPQRGLPE…NARVRLWKPM (63 aa)) form a DNA-binding region, homeobox. The interval 385 to 434 (FTENDSNSSSENTPKMSEIGPVAADDEDRAREFSQDQTKPDHGHGYGEET) is disordered. Positions 412–434 (DRAREFSQDQTKPDHGHGYGEET) are enriched in basic and acidic residues.

The protein belongs to the TALE/BELL homeobox family. May form heterodimeric complexes with TALE/KNOX proteins. Interacts with OFP2, OFP4, and OFP5.

It is found in the nucleus. This Arabidopsis thaliana (Mouse-ear cress) protein is BEL1-like homeodomain protein 6 (BLH6).